The sequence spans 337 residues: Carbonic anhydrase 14 (337 aa).

Residues 1–15 (MLFSALLLEVIWILA) form the signal peptide. Residues 16–290 (ADGGQHWTYE…AGSSYTTGEM (275 aa)) are Extracellular-facing. The region spanning 20–278 (QHWTYEGPHG…LNQRMVFASF (259 aa)) is the Alpha-carbonic anhydrase domain. C40 and C221 form a disulfide bridge. H84 serves as the catalytic Proton donor/acceptor. Positions 109, 111, and 135 each coordinate Zn(2+). An N-linked (GlcNAc...) asparagine glycan is attached at N213. 217-218 (TT) is a binding site for substrate. The helical transmembrane segment at 291 to 311 (LSLGVGILVGCLCLLLAVYFI) threads the bilayer. The Cytoplasmic segment spans residues 312-337 (ARKIRKKRLENRKSVVFTSAQATTEA). S325 is modified (phosphoserine).

It belongs to the alpha-carbonic anhydrase family. The cofactor is Zn(2+). In terms of tissue distribution, high expression in all parts of the central nervous system and lower expression in adult liver, heart, small intestine, colon, kidney, urinary bladder and skeletal muscle.

It is found in the membrane. It carries out the reaction hydrogencarbonate + H(+) = CO2 + H2O. With respect to regulation, activated by histamine, L-adrenaline, L- and D-histidine, and L- and D-phenylalanine. Inhibited by coumarins, saccharin, sulfonamide derivatives such as acetazolamide (AZA) and Foscarnet (phosphonoformate trisodium salt). Its function is as follows. Reversible hydration of carbon dioxide. The protein is Carbonic anhydrase 14 (CA14) of Homo sapiens (Human).